Reading from the N-terminus, the 111-residue chain is HTH-type transcriptional regulator SinR (111 aa).

One can recognise an HTH cro/C1-type domain in the interval 6–61 (IKQYRKEKGYSLSELAEKAGVAKSYLSSIERNLQTNPSIQFLEKVSAVLDVSVHTL). Positions 17–36 (LSELAEKAGVAKSYLSSIER) form a DNA-binding region, H-T-H motif. Residues 65–103 (KDETEYDGQLDSEWENLVRDAMASGVSKKQFREFLDYQK) enclose the Sin domain.

As to quaternary structure, homotetramer. Also associates with SinI.

Its function is as follows. Affects autolysin level and flagellation. The chain is HTH-type transcriptional regulator SinR (sinR) from Bacillus licheniformis.